The chain runs to 232 residues: Enolase-phosphatase E1 (232 aa).

It belongs to the HAD-like hydrolase superfamily. MasA/MtnC family. As to quaternary structure, monomer. Mg(2+) is required as a cofactor.

The catalysed reaction is 5-methylsulfanyl-2,3-dioxopentyl phosphate + H2O = 1,2-dihydroxy-5-(methylsulfanyl)pent-1-en-3-one + phosphate. The protein operates within amino-acid biosynthesis; L-methionine biosynthesis via salvage pathway; L-methionine from S-methyl-5-thio-alpha-D-ribose 1-phosphate: step 3/6. It functions in the pathway amino-acid biosynthesis; L-methionine biosynthesis via salvage pathway; L-methionine from S-methyl-5-thio-alpha-D-ribose 1-phosphate: step 4/6. Its function is as follows. Bifunctional enzyme that catalyzes the enolization of 2,3-diketo-5-methylthiopentyl-1-phosphate (DK-MTP-1-P) into the intermediate 2-hydroxy-3-keto-5-methylthiopentenyl-1-phosphate (HK-MTPenyl-1-P), which is then dephosphorylated to form the acireductone 1,2-dihydroxy-3-keto-5-methylthiopentene (DHK-MTPene). The protein is Enolase-phosphatase E1 of Nocardia farcinica (strain IFM 10152).